The sequence spans 115 residues: MIPGEYVLGSTPVVINAGRDAIDVVVVNTGDRPVQVGSHYHFAEANAALAFDRAAAYGRRLDIPAGTAARFEPGDSKTVRLIELAGSREVYGLSNAVNGTLDAGNARQEAKTEAK.

Belongs to the urease beta subunit family. In terms of assembly, heterotrimer of UreA (gamma), UreB (beta) and UreC (alpha) subunits. Three heterotrimers associate to form the active enzyme.

The protein resides in the cytoplasm. The catalysed reaction is urea + 2 H2O + H(+) = hydrogencarbonate + 2 NH4(+). Its pathway is nitrogen metabolism; urea degradation; CO(2) and NH(3) from urea (urease route): step 1/1. This chain is Urease subunit beta, found in Arthrobacter sp. (strain FB24).